The chain runs to 445 residues: Phosphoglucosamine mutase (445 aa).

Ser-101 (phosphoserine intermediate) is an active-site residue. Mg(2+)-binding residues include Ser-101, Asp-240, Asp-242, and Asp-244. Ser-101 carries the phosphoserine modification.

This sequence belongs to the phosphohexose mutase family. It depends on Mg(2+) as a cofactor. In terms of processing, activated by phosphorylation.

It carries out the reaction alpha-D-glucosamine 1-phosphate = D-glucosamine 6-phosphate. In terms of biological role, catalyzes the conversion of glucosamine-6-phosphate to glucosamine-1-phosphate. The chain is Phosphoglucosamine mutase from Azotobacter vinelandii (strain DJ / ATCC BAA-1303).